The chain runs to 325 residues: MKTRTLKVLKPTLALLLAASFSAGALAQEVTLRLVSAFPENGIYVQRLLPWIAKVNAEGKGVLQINFLGGPKAIPTFEAGNAVKTGVVDMAMNTGAFYTNVMPEADFLKLTQIPVAEQRKNGAFDAINKVWNEKGNTQYLARMVENQPFHIYTNKKIDKPDLSGQKIRISPVYRDFFQALNANVVTTPPGEVYTALERGVVDGYGWPIGGIFDLNWQEKTKFRVDPGFYDAEVSLTMNLPAYKKLTDAQRNYLQKQLLVLEAENTFWTRYGNVETARQETAGIQTIKFDAATSKAFREKAYEVGWAGAMKQSPEVAARFKTLFSK.

Residues 1–27 (MKTRTLKVLKPTLALLLAASFSAGALA) form the signal peptide. A phenylglyoxylate-binding site is contributed by 168-173 (RISPVY).

It belongs to the bacterial solute-binding protein 7 family. As to quaternary structure, the complex is comprised of an extracytoplasmic solute-binding protein and a heteromeric permease formed by two transmembrane proteins.

The protein localises to the periplasm. Functionally, solute-binding protein that binds phenylglyoxylate (in vitro). Probably part of a tripartite ATP-independent periplasmic (TRAP) transport system that mediates solute transport into the cytoplasm. The polypeptide is Solute-binding protein Bpro_4736 (Polaromonas sp. (strain JS666 / ATCC BAA-500)).